Consider the following 472-residue polypeptide: Methanethiol oxidase (472 aa).

It belongs to the selenium-binding protein family.

It localises to the nucleus. Its subcellular location is the cytoplasm. The protein resides in the cytosol. It is found in the membrane. The enzyme catalyses methanethiol + O2 + H2O = hydrogen sulfide + formaldehyde + H2O2 + H(+). The protein operates within organosulfur degradation. Its function is as follows. Catalyzes the oxidation of methanethiol, an organosulfur compound known to be produced in substantial amounts by gut bacteria. Selenium-binding protein which may be involved in the sensing of reactive xenobiotics in the cytoplasm. May be involved in intra-Golgi protein transport. This is Methanethiol oxidase (selenbp1-b) from Xenopus laevis (African clawed frog).